We begin with the raw amino-acid sequence, 437 residues long: Membrane protein NfeD1b (437 aa).

Transmembrane regions (helical) follow at residues 2–22, 231–251, 253–273, 288–308, and 316–336; these read LQIKGFRAALLGIFLLSLLGV, WLTNPVIVPILLTIAFLGLTV, LFSPGVGLPGTAGLIALLLFF, LLFIAGVILILLEIFLPGGII, and IIASLFLAAGSFTVMAVSLLI.

It belongs to the NfeD family.

It localises to the cell membrane. The protein is Membrane protein NfeD1b of Bacillus subtilis (strain 168).